We begin with the raw amino-acid sequence, 356 residues long: Alanine racemase (356 aa).

The active-site Proton acceptor; specific for D-alanine is the lysine 35. N6-(pyridoxal phosphate)lysine is present on lysine 35. A substrate-binding site is contributed by arginine 130. Tyrosine 253 serves as the catalytic Proton acceptor; specific for L-alanine. Substrate is bound at residue methionine 301.

This sequence belongs to the alanine racemase family. Requires pyridoxal 5'-phosphate as cofactor.

The enzyme catalyses L-alanine = D-alanine. The protein operates within amino-acid biosynthesis; D-alanine biosynthesis; D-alanine from L-alanine: step 1/1. In terms of biological role, catalyzes the interconversion of L-alanine and D-alanine. May also act on other amino acids. The chain is Alanine racemase (alr) from Sodalis glossinidius (strain morsitans).